A 157-amino-acid chain; its full sequence is Peptide methionine sulfoxide reductase MsrA (157 aa).

Cys10 is an active-site residue.

Belongs to the MsrA Met sulfoxide reductase family.

It carries out the reaction L-methionyl-[protein] + [thioredoxin]-disulfide + H2O = L-methionyl-(S)-S-oxide-[protein] + [thioredoxin]-dithiol. The catalysed reaction is [thioredoxin]-disulfide + L-methionine + H2O = L-methionine (S)-S-oxide + [thioredoxin]-dithiol. Has an important function as a repair enzyme for proteins that have been inactivated by oxidation. Catalyzes the reversible oxidation-reduction of methionine sulfoxide in proteins to methionine. In Clostridium botulinum (strain Okra / Type B1), this protein is Peptide methionine sulfoxide reductase MsrA.